A 192-amino-acid chain; its full sequence is Inner membrane protein YohD (192 aa).

Topologically, residues 1-40 (MDLNTLISQYGYAALVIGSLAEGETVTLLGGVAAHQGLLK) are periplasmic. Residues 41–61 (FPLVVLSVALGGMIGDQVLYL) traverse the membrane as a helical segment. At 62 to 121 (CGRRFGGKLLRRFSKHQDKIERAQKLIQRHPYLFVIGTRFMYGFRVIGPTLIGASQLPPK) the chain is on the cytoplasmic side. A helical membrane pass occupies residues 122 to 142 (IFLPLNILGAFAWALIFTTIG). Topologically, residues 143 to 159 (YAGGQVIAPWLHNLDQH) are periplasmic. A helical membrane pass occupies residues 160 to 180 (LKHWVWLILVVVLVVGVRWWL). Residues 181 to 192 (KRRGKKKPDHQA) are Cytoplasmic-facing.

The protein belongs to the DedA family.

It localises to the cell inner membrane. This chain is Inner membrane protein YohD (yohD), found in Escherichia coli (strain K12).